Reading from the N-terminus, the 295-residue chain is Probable porphobilinogen deaminase (295 aa).

Cys234 carries the S-(dipyrrolylmethanemethyl)cysteine modification.

This sequence belongs to the HMBS family. The cofactor is dipyrromethane.

The enzyme catalyses 4 porphobilinogen + H2O = hydroxymethylbilane + 4 NH4(+). Its pathway is porphyrin-containing compound metabolism; protoporphyrin-IX biosynthesis; coproporphyrinogen-III from 5-aminolevulinate: step 2/4. In terms of biological role, tetrapolymerization of the monopyrrole PBG into the hydroxymethylbilane pre-uroporphyrinogen in several discrete steps. This Thermoplasma acidophilum (strain ATCC 25905 / DSM 1728 / JCM 9062 / NBRC 15155 / AMRC-C165) protein is Probable porphobilinogen deaminase (hemC).